The sequence spans 265 residues: Undecaprenyl-diphosphatase (265 aa).

Helical transmembrane passes span 41–61 (IAYTFGLFMEMGSIGSALIYF), 75–95 (LKFLVVVTALTGIVGVPLYVI), 104–124 (YNPSIPMIFLGIALIADGIYI), 137–157 (LSTKEMILIGIAQGIAALPGV), 180–200 (YSYLAYIPAAIGSVGTTLLFT), 215–235 (GIALAVISALLTGLVVIGFLL), and 244–264 (YLIDFMLGGIAVLVSMLGLII).

Belongs to the UppP family.

It localises to the cell membrane. It carries out the reaction di-trans,octa-cis-undecaprenyl diphosphate + H2O = di-trans,octa-cis-undecaprenyl phosphate + phosphate + H(+). In terms of biological role, catalyzes the dephosphorylation of undecaprenyl diphosphate (UPP). In Saccharolobus islandicus (strain Y.G.57.14 / Yellowstone #1) (Sulfolobus islandicus), this protein is Undecaprenyl-diphosphatase.